We begin with the raw amino-acid sequence, 98 residues long: Large ribosomal subunit protein uL23 (98 aa).

Belongs to the universal ribosomal protein uL23 family. Part of the 50S ribosomal subunit. Contacts protein L29, and trigger factor when it is bound to the ribosome.

One of the early assembly proteins it binds 23S rRNA. One of the proteins that surrounds the polypeptide exit tunnel on the outside of the ribosome. Forms the main docking site for trigger factor binding to the ribosome. The chain is Large ribosomal subunit protein uL23 from Marinomonas sp. (strain MWYL1).